Reading from the N-terminus, the 261-residue chain is Thioesterase TesA (261 aa).

Active-site residues include Ser104, Asp208, and His236.

This sequence belongs to the thioesterase family.

It catalyses the reaction a fatty acyl-CoA + H2O = a fatty acid + CoA + H(+). Its function is as follows. Involved in the synthesis of both phthiocerol dimycocerosates (PDIMs) and phenolic glycolipids (PGLs), which are structurally related lipids non-covalently bound to the outer cell wall layer of M.tuberculosis and are important virulence factors. The chain is Thioesterase TesA (tesA) from Mycobacterium leprae (strain TN).